The chain runs to 310 residues: 4-hydroxyproline 2-epimerase (310 aa).

The active-site Proton acceptor is Cys-88. Residues 89-90 (GH), His-208, and Asp-232 contribute to the substrate site. Cys-236 acts as the Proton donor in catalysis. 237–238 (GT) is a binding site for substrate.

This sequence belongs to the proline racemase family.

The enzyme catalyses trans-4-hydroxy-L-proline = cis-4-hydroxy-D-proline. Functionally, catalyzes the epimerization of trans-4-hydroxy-L-proline (t4LHyp) to cis-4-hydroxy-D-proline (c4DHyp). Is likely involved in a degradation pathway that converts t4LHyp to alpha-ketoglutarate. Displays no proline racemase activity. This is 4-hydroxyproline 2-epimerase from Burkholderia cenocepacia (strain ATCC BAA-245 / DSM 16553 / LMG 16656 / NCTC 13227 / J2315 / CF5610) (Burkholderia cepacia (strain J2315)).